A 123-amino-acid chain; its full sequence is uncharacterized protein (123 aa).

This is an uncharacterized protein from Methanocaldococcus jannaschii (strain ATCC 43067 / DSM 2661 / JAL-1 / JCM 10045 / NBRC 100440) (Methanococcus jannaschii).